A 525-amino-acid chain; its full sequence is Sensory neuron membrane protein 1 (525 aa).

The Cytoplasmic segment spans residues 1–11 (MLLPKELKYAA). The chain crosses the membrane as a helical span at residues 12–32 (IAGGVAVFGLIFGWVLFPVIL). The Extracellular portion of the chain corresponds to 33–456 (KGQLKKEMAL…LKHQLFIPKR (424 aa)). N-linked (GlcNAc...) asparagine glycans are attached at residues Asn-67, Asn-229, and Asn-324. 3 cysteine pairs are disulfide-bonded: Cys-268-Cys-333, Cys-297-Cys-352, and Cys-335-Cys-341. N-linked (GlcNAc...) asparagine glycosylation occurs at Asn-440. The chain crosses the membrane as a helical span at residues 457 to 477 (VVGVLRWWMVSFGSLGADIGI). Residues 478-525 (VYHFRDHIMRLAVSGDTKVSKVTPEEDPEQKDISVIGPPAQEPAKINI) are Cytoplasmic-facing. A disordered region spans residues 497–525 (SKVTPEEDPEQKDISVIGPPAQEPAKINI).

Belongs to the CD36 family.

The protein resides in the cell membrane. Functionally, plays an olfactory role that is not restricted to pheromone sensitivity. The sequence is that of Sensory neuron membrane protein 1 from Mamestra brassicae (Cabbage moth).